A 207-amino-acid chain; its full sequence is Outer-membrane lipoprotein carrier protein (207 aa).

The N-terminal stretch at 1–21 is a signal peptide; it reads MRLFRVLLLSAVAFALSPAQA.

It belongs to the LolA family. In terms of assembly, monomer.

Its subcellular location is the periplasm. In terms of biological role, participates in the translocation of lipoproteins from the inner membrane to the outer membrane. Only forms a complex with a lipoprotein if the residue after the N-terminal Cys is not an aspartate (The Asp acts as a targeting signal to indicate that the lipoprotein should stay in the inner membrane). This is Outer-membrane lipoprotein carrier protein from Azotobacter vinelandii (strain DJ / ATCC BAA-1303).